The following is a 79-amino-acid chain: Short neurotoxin 7 (79 aa).

An N-terminal signal peptide occupies residues 1-21 (MKTLLLTLVMVTIMCLDLGYT). 4 cysteine pairs are disulfide-bonded: cysteine 24-cysteine 41, cysteine 34-cysteine 59, cysteine 63-cysteine 71, and cysteine 72-cysteine 77.

It belongs to the three-finger toxin family. Short-chain subfamily. Type III alpha-neurotoxin sub-subfamily. As to expression, expressed by the venom gland.

It localises to the secreted. Binds with high affinity to muscle nicotinic acetylcholine receptor (nAChR) and hinders acetylcholine binding to the receptor, thereby impairing neuromuscular transmission. Competes with the binding of alpha-bungarotoxin on muscle AChR (from Torpedo) (IC(50)=0.30 uM). In vivo, causes muscle paralysis, spasms and increased respiration. In Pseudonaja textilis (Eastern brown snake), this protein is Short neurotoxin 7.